The sequence spans 504 residues: Sucrose phosphorylase (504 aa).

Substrate is bound at residue Asp-50. Sucrose-binding positions include His-88, 190 to 192 (RLD), Glu-232, 289 to 290 (HD), 342 to 345 (DLYQ), and Arg-399. Asp-192 functions as the Nucleophile in the catalytic mechanism. The active-site Proton donor is the Glu-232.

The protein belongs to the glycosyl hydrolase 13 family. Sucrose phosphorylase subfamily. In terms of assembly, homodimer.

It catalyses the reaction sucrose + phosphate = D-fructose + alpha-D-glucose 1-phosphate. In terms of biological role, catalyzes the reversible phosphorolysis of sucrose into alpha-D-glucose 1-phosphate (Glc1P) and D-fructose. Is involved in sucrose degradation. Also displays transglucosylation activity in vitro, by transferring the glucosyl moiety of Glc1P to a broad range of monomeric sugars, such as D- and L-arabinose, D- and L-arabitol, and xylitol. In Bifidobacterium adolescentis (strain ATCC 15703 / DSM 20083 / NCTC 11814 / E194a), this protein is Sucrose phosphorylase.